The primary structure comprises 369 residues: uncharacterized protein (369 aa).

Residues Met-1–Asn-35 form a disordered region. Residues Gln-17–His-27 are compositionally biased toward basic and acidic residues. WD repeat units follow at residues Gly-83 to Thr-127, Gly-130 to Leu-169, Gly-174 to Leu-213, Gly-220 to Thr-260, Glu-263 to Ile-301, and Gly-304 to Glu-341.

This is an uncharacterized protein from Schizosaccharomyces pombe (strain 972 / ATCC 24843) (Fission yeast).